Here is a 291-residue protein sequence, read N- to C-terminus: Urease accessory protein UreD (291 aa).

The protein belongs to the UreD family. UreD, UreF and UreG form a complex that acts as a GTP-hydrolysis-dependent molecular chaperone, activating the urease apoprotein by helping to assemble the nickel containing metallocenter of UreC. The UreE protein probably delivers the nickel.

It localises to the cytoplasm. Required for maturation of urease via the functional incorporation of the urease nickel metallocenter. In Acinetobacter baumannii (strain ACICU), this protein is Urease accessory protein UreD.